The primary structure comprises 115 residues: Large ribosomal subunit protein bL19 (115 aa).

This sequence belongs to the bacterial ribosomal protein bL19 family.

Functionally, this protein is located at the 30S-50S ribosomal subunit interface and may play a role in the structure and function of the aminoacyl-tRNA binding site. The chain is Large ribosomal subunit protein bL19 from Streptococcus suis (strain 98HAH33).